We begin with the raw amino-acid sequence, 467 residues long: Cysteine--tRNA ligase (467 aa).

Cysteine 30 lines the Zn(2+) pocket. The 'HIGH' region motif lies at 32–42 (PTVYNYIHIGN). Zn(2+) is bound by residues cysteine 210, histidine 235, and glutamate 239. A 'KMSKS' region motif is present at residues 267–271 (KMSKS). ATP is bound at residue lysine 270. Serine 271 bears the Phosphoserine mark.

The protein belongs to the class-I aminoacyl-tRNA synthetase family. As to quaternary structure, monomer. It depends on Zn(2+) as a cofactor.

The protein localises to the cytoplasm. The enzyme catalyses tRNA(Cys) + L-cysteine + ATP = L-cysteinyl-tRNA(Cys) + AMP + diphosphate. In Geobacillus thermodenitrificans (strain NG80-2), this protein is Cysteine--tRNA ligase.